The sequence spans 465 residues: Lactaldehyde dehydrogenase (465 aa).

220-225 (GSVEVG) lines the NAD(+) pocket. Residues Glu240 and Cys274 contribute to the active site.

It belongs to the aldehyde dehydrogenase family. Homotetramer.

It carries out the reaction (S)-lactaldehyde + NAD(+) + H2O = (S)-lactate + NADH + 2 H(+). It functions in the pathway cofactor biosynthesis; coenzyme F420 biosynthesis. Its function is as follows. Involved in F420 biosynthesis through the oxidation of lactaldehyde to lactate. The sequence is that of Lactaldehyde dehydrogenase from Methanococcus maripaludis (strain DSM 14266 / JCM 13030 / NBRC 101832 / S2 / LL).